A 325-amino-acid chain; its full sequence is Delta(1)-pyrroline-2-carboxylate reductase (325 aa).

This sequence belongs to the ornithine cyclodeaminase/mu-crystallin family.

The enzyme catalyses L-proline + NAD(+) = 1-pyrroline-2-carboxylate + NADH + H(+). It catalyses the reaction L-proline + NADP(+) = 1-pyrroline-2-carboxylate + NADPH + H(+). In terms of biological role, catalyzes the reduction of Delta(1)-pyrroline-2-carboxylate (Pyr2C) to L-proline, using preferentially NADPH over NADH as the electron donor. May be involved in a degradation pathway that converts trans-3-hydroxy-L-proline (t3LHyp) to L-proline. In Bacillus cereus (strain ZK / E33L), this protein is Delta(1)-pyrroline-2-carboxylate reductase.